Here is a 233-residue protein sequence, read N- to C-terminus: Protein Mis18-alpha (233 aa).

Phosphoserine occurs at positions 36, 39, and 40. Residues 80–178 (PLVFLCSGCR…SVEAIESYVL (99 aa)) form the Mis18 domain. 4 residues coordinate Zn(2+): C85, C88, C141, and C144. K162 participates in a covalent cross-link: Glycyl lysine isopeptide (Lys-Gly) (interchain with G-Cter in SUMO2). S233 carries the phosphoserine modification.

The protein belongs to the mis18 family. As to quaternary structure, homodimer, and heterodimer with OIP5/MIS18B. Identified in a complex containing MIS18A, OIP5/MIS18B, MIS18BP1, RBBP7 and RBBP4. Detected in testis.

The protein resides in the nucleus. The protein localises to the chromosome. It is found in the centromere. Its function is as follows. Required for recruitment of CENPA to centromeres and normal chromosome segregation during mitosis. The protein is Protein Mis18-alpha (MIS18A) of Homo sapiens (Human).